Here is a 79-residue protein sequence, read N- to C-terminus: Putative membrane protein insertion efficiency factor (79 aa).

Belongs to the UPF0161 family.

It localises to the cell inner membrane. In terms of biological role, could be involved in insertion of integral membrane proteins into the membrane. This chain is Putative membrane protein insertion efficiency factor, found in Rippkaea orientalis (strain PCC 8801 / RF-1) (Cyanothece sp. (strain PCC 8801)).